The primary structure comprises 304 residues: N-acetylmuramic acid 6-phosphate etherase (304 aa).

In terms of domain architecture, SIS spans I62–K225. The active-site Proton donor is E90. The active site involves E121.

The protein belongs to the GCKR-like family. MurNAc-6-P etherase subfamily. Homodimer.

It catalyses the reaction N-acetyl-D-muramate 6-phosphate + H2O = N-acetyl-D-glucosamine 6-phosphate + (R)-lactate. Its pathway is amino-sugar metabolism; 1,6-anhydro-N-acetylmuramate degradation. It functions in the pathway amino-sugar metabolism; N-acetylmuramate degradation. The protein operates within cell wall biogenesis; peptidoglycan recycling. Functionally, specifically catalyzes the cleavage of the D-lactyl ether substituent of MurNAc 6-phosphate, producing GlcNAc 6-phosphate and D-lactate. Together with AnmK, is also required for the utilization of anhydro-N-acetylmuramic acid (anhMurNAc) either imported from the medium or derived from its own cell wall murein, and thus plays a role in cell wall recycling. This Actinobacillus succinogenes (strain ATCC 55618 / DSM 22257 / CCUG 43843 / 130Z) protein is N-acetylmuramic acid 6-phosphate etherase.